We begin with the raw amino-acid sequence, 60 residues long: Large ribosomal subunit protein bL32 (60 aa).

The interval Met1–Ser43 is disordered.

This sequence belongs to the bacterial ribosomal protein bL32 family.

The protein is Large ribosomal subunit protein bL32 of Nitrosomonas europaea (strain ATCC 19718 / CIP 103999 / KCTC 2705 / NBRC 14298).